A 139-amino-acid polypeptide reads, in one-letter code: MPSRKYKIYDDDVMVCDTKWINLSGNHMTMCECLSCRLKLYISFTKNPLTKFIIFHPSRNRFIYQSAFIFVGLDENNSIGCILMSYKLKEGLETFKNKYPELCYENKKYENKKYENIEKYLEKCLTVKPQKKRKIYYRL.

This is an uncharacterized protein from Invertebrate iridescent virus 6 (IIV-6).